The primary structure comprises 79 residues: Apolipoprotein C-II (79 aa).

The N-terminal stretch at 1–21 (MDLKVVAVSFLLLVLCSEAAG) is a signal peptide. Residues 45-52 (GVEKLRDI) are lipid binding. Positions 56 to 79 (SVDAVGTYTSILTDQLYHWWCGEQ) are lipoprotein lipase cofactor.

Belongs to the apolipoprotein C2 family. In terms of processing, proapolipoprotein C-II is synthesized as a sialic acid containing glycoprotein which is subsequently desialylated prior to its proteolytic processing. Proapolipoprotein C-II, the major form found in plasma undergoes proteolytic cleavage of its N-terminal hexapeptide to generate apolipoprotein C-II, which occurs as the minor form in plasma.

The protein resides in the secreted. In terms of biological role, component of chylomicrons, very low-density lipoproteins (VLDL), low-density lipoproteins (LDL), and high-density lipoproteins (HDL) in plasma. Plays an important role in lipoprotein metabolism as an activator of lipoprotein lipase. Both proapolipoprotein C-II and apolipoprotein C-II can activate lipoprotein lipase. This chain is Apolipoprotein C-II (APOC2), found in Alligator mississippiensis (American alligator).